The sequence spans 194 residues: Potassium-transporting ATPase KdpC subunit (194 aa).

The helical transmembrane segment at 12–34 (LFLLLLTGGVYPLLTTALGQWWF) threads the bilayer.

Belongs to the KdpC family. As to quaternary structure, the system is composed of three essential subunits: KdpA, KdpB and KdpC.

Its subcellular location is the cell inner membrane. Part of the high-affinity ATP-driven potassium transport (or Kdp) system, which catalyzes the hydrolysis of ATP coupled with the electrogenic transport of potassium into the cytoplasm. This subunit acts as a catalytic chaperone that increases the ATP-binding affinity of the ATP-hydrolyzing subunit KdpB by the formation of a transient KdpB/KdpC/ATP ternary complex. This Salmonella agona (strain SL483) protein is Potassium-transporting ATPase KdpC subunit.